A 419-amino-acid polypeptide reads, in one-letter code: Protein farnesyltransferase subunit beta (419 aa).

5 PFTB repeats span residues 68–109 (EDNT…ITLG), 119–160 (RNKL…SVLN), 167–208 (IKNV…ILIG), 215–256 (LPRL…ALLQ), and 329–371 (SIAL…SLCQ). Residues 193–196 (HGGY) and 235–238 (RTNK) contribute to the (2E,6E)-farnesyl diphosphate site. 2 residues coordinate Zn(2+): Asp-241 and Cys-243. Residue 244–247 (YSFW) coordinates (2E,6E)-farnesyl diphosphate. His-359 is a binding site for Zn(2+).

Belongs to the protein prenyltransferase subunit beta family. In terms of assembly, heterodimer of FTA and FTB. Zn(2+) serves as cofactor.

It carries out the reaction L-cysteinyl-[protein] + (2E,6E)-farnesyl diphosphate = S-(2E,6E)-farnesyl-L-cysteinyl-[protein] + diphosphate. Functionally, catalyzes the transfer of a farnesyl moiety from farnesyl diphosphate to a cysteine at the fourth position from the C-terminus of several proteins. The beta subunit FTB is responsible for peptide-binding. This is Protein farnesyltransferase subunit beta (FTB) from Pisum sativum (Garden pea).